Reading from the N-terminus, the 537-residue chain is Hexosyltransferase GAUT11 (537 aa).

At 1 to 16 the chain is on the cytoplasmic side; that stretch reads MRRWPVDHRRRGRRRL. The helical; Signal-anchor for type II membrane protein transmembrane segment at 17-37 threads the bilayer; that stretch reads SSWIWFLLGSFSVAGLVLFIV. Residues 38-537 are Lumenal-facing; sequence QHYHHQQDPS…HPYLQDCVTA (500 aa). 6 N-linked (GlcNAc...) asparagine glycosylation sites follow: Asn66, Asn247, Asn299, Asn403, Asn436, and Asn525.

This sequence belongs to the glycosyltransferase 8 family. In terms of assembly, monomer. As to expression, expressed in roots, inflorescences, siliques, seeds, leaves and stems.

Its subcellular location is the golgi apparatus membrane. It carries out the reaction [(1-&gt;4)-alpha-D-galacturonosyl](n) + UDP-alpha-D-galacturonate = [(1-&gt;4)-alpha-D-galacturonosyl](n+1) + UDP + H(+). Its pathway is glycan metabolism; pectin biosynthesis. Its function is as follows. Glycosyltransferase involved in pectin and/or xylans biosynthesis in cell walls. Required for the biosynthesis of pectin in seed coat epidermal (SCE) cells. Collaboratively with MUCI70, essential for the accumulation of seed mucilage, a gelatinous wall rich in unbranched rhamnogalacturonan I (RG I), and for shaping the surface morphology of seeds. Catalyzes homogalacturonan (HG) elongation by acting as an HG alpha-1,4 galacturonic acid transferase. The protein is Hexosyltransferase GAUT11 of Arabidopsis thaliana (Mouse-ear cress).